Reading from the N-terminus, the 319-residue chain is MYSKLNYSHQKGDQALKHPHLVRLQQSEVRGFTDMPNNGASTSSAGSFARQDSLTIAASLQQRDRERHPVDFMETELDLGDYLQVLHDLDVPTDNVDFDDAELQKCNILYDGEHPYEQPELNGYERHVAYGTGYRVPGDYDQDGYKMNCEVKAETPDFGATKTRRAVKRPVPYDDYQKEYSEESSDMTDNDGSVDDSYFEPKSKKTKSAGLENFKPQTRARKYKLKADEEKAEPTYKLKRARNNDAVRKSRKKAKELQDKKEAEHDKMKRRIAELEGLLQSERDARRRDQDTLEQLLRNKGPMKEQRMPQRHILENFNK.

The segment at 53-67 (SLTIAASLQQRDRER) is n' domain; required for axon regeneration. The segment at 163 to 319 (TRRAVKRPVP…QRHILENFNK (157 aa)) is disordered. Residues 171–181 (VPYDDYQKEYS) are compositionally biased toward basic and acidic residues. Positions 182–198 (EESSDMTDNDGSVDDSY) are enriched in acidic residues. Composition is skewed to basic and acidic residues over residues 225-248 (LKAD…DAVR), 255-274 (KELQ…RIAE), 281-291 (SERDARRRDQD), and 302-319 (PMKE…NFNK). In terms of domain architecture, bZIP spans 233 to 308 (EPTYKLKRAR…NKGPMKEQRM (76 aa)). The basic motif stretch occupies residues 237–271 (KLKRARNNDAVRKSRKKAKELQDKKEAEHDKMKRR). Positions 275–308 (LEGLLQSERDARRRDQDTLEQLLRNKGPMKEQRM) are leucine-zipper.

It belongs to the bZIP family. C/EBP subfamily. May interact with transcription factor ets-4. May interact (via N-terminus) with nipi-3. May interact (via N-terminus) with importin subunit alpha ima-3. In terms of tissue distribution, expressed in touch and motor neurons.

It is found in the synapse. Its subcellular location is the cytoplasm. The protein resides in the nucleus. The protein localises to the cell projection. It localises to the axon. Functionally, transcription factor. Binds to promoter regions of target genes, perhaps at the motif 5'-[AGCT]TT[AGT][TC]GAAA[ACT]-3'. Modulates expression of genes involved in development and in stress responses, including those regulating the p38/MAPK signaling pathways such as MAPKK sek-1 and phosphatase vhp-1. Involved in innate immunity. Plays a role in repressing the response to infection by the Gram-negative bacterium P.aeruginosa, perhaps acting independently of the pmk-1 or pmk-3 p38/MAPK pathways. However, also plays a protective role in the response to infection by P.aeruginosa. Required in axonal regrowth following injury and synaptogenesis. Following axon injury, in concert with transcription factor ets-4, activates expression of receptor tyrosine kinase svh-2. May function downstream of the Ca2+-activated p38/MAPK pathway to promote axon regeneration. Plays a role in modulating polymerization of neuronal microtubules. Involved in modulating lipid homeostasis. The chain is CCAAT/enhancer-binding protein homolog 1 from Caenorhabditis elegans.